The following is a 330-amino-acid chain: Phosphate acyltransferase (330 aa).

It belongs to the PlsX family. In terms of assembly, homodimer. Probably interacts with PlsY.

Its subcellular location is the cytoplasm. It carries out the reaction a fatty acyl-[ACP] + phosphate = an acyl phosphate + holo-[ACP]. Its pathway is lipid metabolism; phospholipid metabolism. Functionally, catalyzes the reversible formation of acyl-phosphate (acyl-PO(4)) from acyl-[acyl-carrier-protein] (acyl-ACP). This enzyme utilizes acyl-ACP as fatty acyl donor, but not acyl-CoA. In Bacillus cereus (strain ATCC 14579 / DSM 31 / CCUG 7414 / JCM 2152 / NBRC 15305 / NCIMB 9373 / NCTC 2599 / NRRL B-3711), this protein is Phosphate acyltransferase.